A 516-amino-acid polypeptide reads, in one-letter code: ADP-ribosylation factor GTPase-activating protein 3 (516 aa).

Residues 10–126 (LTIFKRLRSV…IKSLASQATR (117 aa)) form the Arf-GAP domain. Residues 25-48 (CFDCGAKNPSWASITYGVFLCIDC) form a C4-type zinc finger. The disordered stretch occupies residues 170–199 (AEPSSLTSRPVETTLENNEGGQEQGPSVEG). Over residues 173 to 194 (SSLTSRPVETTLENNEGGQEQG) the composition is skewed to polar residues. Phosphoserine is present on Ser-231. A coiled-coil region spans residues 243-264 (NEIEKQAQAADKMKEQEDLAKA). Residues Ser-270, Ser-274, Ser-331, and Ser-370 each carry the phosphoserine modification. The disordered stretch occupies residues 392-414 (KTTGYSDRPTARRKPDYEPVENT). Residues Ser-428, Ser-451, Ser-453, Ser-455, Ser-457, and Ser-458 each carry the phosphoserine modification.

It localises to the cytoplasm. Its subcellular location is the golgi apparatus membrane. Its activity is regulated as follows. GAP activity stimulated by phosphatidylinositol 4,5-bisphosphate (PIP2). GTPase-activating protein (GAP) for ADP ribosylation factor 1 (ARF1). Hydrolysis of ARF1-bound GTP may lead to dissociation of coatomer from Golgi-derived membranes to allow fusion with target membranes. The protein is ADP-ribosylation factor GTPase-activating protein 3 of Macaca fascicularis (Crab-eating macaque).